Here is an 88-residue protein sequence, read N- to C-terminus: Small ribosomal subunit protein uS17 (88 aa).

This sequence belongs to the universal ribosomal protein uS17 family. As to quaternary structure, part of the 30S ribosomal subunit.

Functionally, one of the primary rRNA binding proteins, it binds specifically to the 5'-end of 16S ribosomal RNA. The chain is Small ribosomal subunit protein uS17 from Leuconostoc mesenteroides subsp. mesenteroides (strain ATCC 8293 / DSM 20343 / BCRC 11652 / CCM 1803 / JCM 6124 / NCDO 523 / NBRC 100496 / NCIMB 8023 / NCTC 12954 / NRRL B-1118 / 37Y).